We begin with the raw amino-acid sequence, 66 residues long: Large ribosomal subunit protein uL29 (66 aa).

It belongs to the universal ribosomal protein uL29 family.

The polypeptide is Large ribosomal subunit protein uL29 (Bartonella quintana (strain Toulouse) (Rochalimaea quintana)).